The chain runs to 198 residues: RxLR effector protein CRE4 (198 aa).

A signal peptide spans 1 to 20 (MLRSFLLIVATVSLFGQCKP). The RxLR-dEER motif lies at 43-52 (RFVRTNDEER).

It belongs to the RxLR effector family.

Its subcellular location is the secreted. It localises to the host cytoplasm. The protein resides in the host nucleus. The protein localises to the host nucleolus. In terms of biological role, effector that is involved in host plant infection. Contributes to virulence during the early infection stage, by inhibiting plant defense responses induced by both PAMP-triggered immunity (PTI) and effector-triggered immunity (ETI). The chain is RxLR effector protein CRE4 (CRE4) from Phytophthora infestans (strain T30-4) (Potato late blight agent).